Reading from the N-terminus, the 496-residue chain is MDISISWVVIIVFVLSYLILMDKWRASKLPGNLPPSPPKLPVIGHLHLLRGGLPQHVLRGITQKYGAVAHLQLGEVHSVVLSSAESTKQAMKVLDPTFADRFDSIGSQIMWYNNDDMIFSRYNDHWRQIRKICVSELLSPRNVRSFGFIRQDEMARLIRVFESSEGAAINASEEISKMSCAIVCRAAFGSVLKDQGKLADLVKEALSMASGFELADLYPSSWLLNLLCVNKYRLQRMRGRLDNILDGFLEEHKVKKSGEFGGEDIVDVLYRMQKDTEMKAPITNNGIKGFIFDVFSAGTETSATTIQWALSELMKNPEKMVKAQAEVREKLKGKTNPDVADVQELKYLHSVVKETLRLHPPFPLIPRLCKEECEVTGYTIPAKTRTLVNVWSIGRDPAYWKDPDTFNPDRFDEVSRDVIGNDFELIPFGAGRRVCPGLHFGLANVEVPLAQLLYHFDYKLPSAMTAADMDMSETPGLSGPRKNPLIMIPTIHNPTS.

Residues 1–21 (MDISISWVVIIVFVLSYLILM) form a helical; Signal-anchor for type II membrane protein membrane-spanning segment. Cys435 serves as a coordination point for heme. The interval 471 to 496 (MSETPGLSGPRKNPLIMIPTIHNPTS) is disordered.

The protein belongs to the cytochrome P450 family. Heme serves as cofactor. In terms of tissue distribution, mostly expressed in flowers and stems, and, to a lower extent, in leaves.

The protein localises to the membrane. The enzyme catalyses gamma-terpinene + 2 reduced [NADPH--hemoprotein reductase] + 2 O2 = carvacrol + 2 oxidized [NADPH--hemoprotein reductase] + 3 H2O + 2 H(+). It carries out the reaction (4S)-limonene + reduced [NADPH--hemoprotein reductase] + O2 = (1S,5R)-carveol + oxidized [NADPH--hemoprotein reductase] + H2O + H(+). The catalysed reaction is (4R)-limonene + reduced [NADPH--hemoprotein reductase] + O2 = (1R,5S)-carveol + oxidized [NADPH--hemoprotein reductase] + H2O + H(+). The protein operates within secondary metabolite biosynthesis; terpenoid biosynthesis. Its function is as follows. Involved in the biosynthesis of phenolic monoterpenes natural products thymol and carvacrol which have a broad range of biological activities acting as antimicrobial compounds, insecticides, antioxidants and pharmaceutical agents. Catalyzes the C2-hydroxylation of gamma-terpinene to produce carvacrol. Also mediates the C6-hydroxylation of (4S)-limonene and (4R)-limonene to form carveol. This is Cytochrome P450 71D180 from Origanum vulgare (Wild marjoram).